We begin with the raw amino-acid sequence, 275 residues long: Low affinity immunoglobulin gamma Fc region receptor III-A (275 aa).

A signal peptide spans 1 to 23 (MSVWTSRKAAEDNDTSLSSGIRA). Residues 24-207 (GLQKAVVTLH…SPSTFPPWHQ (184 aa)) lie on the Extracellular side of the membrane. 2 consecutive Ig-like C2-type domains span residues 28–92 (AVVT…YTCQ) and 101–192 (PVNL…LRIT). Intrachain disulfides connect Cys49–Cys91 and Cys131–Cys175. N-linked (GlcNAc...) asparagine glycans are attached at residues Asn65, Asn168, and Asn183. Residues 208-228 (ITFCLLIGLLFTIDTVMYFSV) form a helical membrane-spanning segment. Residues 229–275 (QKGLRRSTADYEEPEVHWSKEPENKTISEEKQSFRSSRANSETPENR) are Cytoplasmic-facing. The disordered stretch occupies residues 237 to 275 (ADYEEPEVHWSKEPENKTISEEKQSFRSSRANSETPENR). A Phosphotyrosine modification is found at Tyr239. A compositionally biased stretch (basic and acidic residues) spans 242–261 (PEVHWSKEPENKTISEEKQS). The segment covering 262-275 (FRSSRANSETPENR) has biased composition (polar residues).

Forms a heterooligomeric complex with ITAM-containing signaling subunits FCER1G. Interacts (via transmembrane domain) with signaling subunits; this interaction is a prerequisite for receptor complex expression on the cell surface and intracellular signal transduction. Binds the Fc region of antigen-complexed IgG. Post-translationally, N-glycosylated. Phosphorylated following receptor ligation.

The protein localises to the cell membrane. Functionally, receptor for the invariable Fc fragment of immunoglobulin gamma (IgG). Binds with intermediate affinity to both IgG2a and IgG2b. Can bind to IgG2a and IgG2b monomers. Does not display binding to IgG1 or IgG3. Recognizes neutralizing virus-specific IgGs displayed on the cell surface of infected cells and triggers antibody-dependent cellular cytotoxicity (ADCC). Confers protection to lethal influenza virus infection. On splenic dendritic cells, uptakes antigen immune complexes and efficiently divert them into MHC class I and II antigen presentation pathways to provide for superior priming of CD4-positive and CD8-positive T cell immune responses. Mediates neutrophil activation by IgG complexes redundantly with FCGR2A. Plays a role in promoting bone resorption by enhancing osteoclast differentiation following binding to IgG2a. Also acts as a receptor for the Fc region of immunoglobulin epsilon (IgE). Binds with low affinity to both the a and b allotypes of IgE. Has also been shown to bind to IgE allotype a only but not to allotype b. Binds aggregated IgE but not the monomeric form and bound monomeric IgG is readily displaced by IgE complexes. Binding to IgE promotes macrophage-mediated phagocytosis, antigen presentation to T cells, production of pro-inflammatory cytokines and the late phase of cutaneous allergic reactions. Mediates enhanced ADCC in response to afucosylated IgGs. The protein is Low affinity immunoglobulin gamma Fc region receptor III-A of Cricetulus griseus (Chinese hamster).